The sequence spans 450 residues: Glucose-6-phosphate isomerase (450 aa).

Position 39 is a phosphothreonine (threonine 39). Glutamate 291 acts as the Proton donor in catalysis. Active-site residues include histidine 312 and lysine 426.

The protein belongs to the GPI family.

Its subcellular location is the cytoplasm. It carries out the reaction alpha-D-glucose 6-phosphate = beta-D-fructose 6-phosphate. It participates in carbohydrate biosynthesis; gluconeogenesis. The protein operates within carbohydrate degradation; glycolysis; D-glyceraldehyde 3-phosphate and glycerone phosphate from D-glucose: step 2/4. Functionally, catalyzes the reversible isomerization of glucose-6-phosphate to fructose-6-phosphate. The polypeptide is Glucose-6-phosphate isomerase (Bacillus anthracis).